The sequence spans 359 residues: UDP-3-O-acylglucosamine N-acyltransferase (359 aa).

Residue H247 is the Proton acceptor of the active site.

It belongs to the transferase hexapeptide repeat family. LpxD subfamily. Homotrimer.

The catalysed reaction is a UDP-3-O-[(3R)-3-hydroxyacyl]-alpha-D-glucosamine + a (3R)-hydroxyacyl-[ACP] = a UDP-2-N,3-O-bis[(3R)-3-hydroxyacyl]-alpha-D-glucosamine + holo-[ACP] + H(+). It functions in the pathway bacterial outer membrane biogenesis; LPS lipid A biosynthesis. Its function is as follows. Catalyzes the N-acylation of UDP-3-O-acylglucosamine using 3-hydroxyacyl-ACP as the acyl donor. Is involved in the biosynthesis of lipid A, a phosphorylated glycolipid that anchors the lipopolysaccharide to the outer membrane of the cell. This Chlorobium chlorochromatii (strain CaD3) protein is UDP-3-O-acylglucosamine N-acyltransferase.